An 88-amino-acid chain; its full sequence is MDGFDKTMKFSIQDEKQSVHVNDVLLTVYDALQEKGYNPINQIVGYLLSGDPAYIPRHKDARNIIRKLERDELIEELVKSYLKQHREE.

Belongs to the UPF0297 family.

The chain is UPF0297 protein Bcer98_3100 from Bacillus cytotoxicus (strain DSM 22905 / CIP 110041 / 391-98 / NVH 391-98).